The primary structure comprises 147 residues: UPF0251 protein CTC_01373 (147 aa).

This sequence belongs to the UPF0251 family.

The polypeptide is UPF0251 protein CTC_01373 (Clostridium tetani (strain Massachusetts / E88)).